A 1085-amino-acid polypeptide reads, in one-letter code: Translation factor GUF1 homolog, mitochondrial (1085 aa).

The tr-type G domain maps to 232–409 (KYIRNFCILA…RIISDIPPPI (178 aa)). Residues 241–248 (AHIDSGKS), 302–306 (DTPGH), and 356–359 (NKID) each bind GTP.

The protein belongs to the TRAFAC class translation factor GTPase superfamily. Classic translation factor GTPase family. LepA subfamily.

The protein resides in the mitochondrion inner membrane. The enzyme catalyses GTP + H2O = GDP + phosphate + H(+). In terms of biological role, promotes mitochondrial protein synthesis. May act as a fidelity factor of the translation reaction, by catalyzing a one-codon backward translocation of tRNAs on improperly translocated ribosomes. Binds to mitochondrial ribosomes in a GTP-dependent manner. The sequence is that of Translation factor GUF1 homolog, mitochondrial from Plasmodium falciparum (isolate 3D7).